We begin with the raw amino-acid sequence, 293 residues long: Large ribosomal subunit protein uL18 (293 aa).

A disordered region spans residues 249–273 (DASPAAKKAAKPSKRHTAKRLTYDE). Residues 256–267 (KAAKPSKRHTAK) show a composition bias toward basic residues.

The protein belongs to the universal ribosomal protein uL18 family. In terms of assembly, component of the large ribosomal subunit (LSU).

It localises to the cytoplasm. The protein localises to the nucleus. Its function is as follows. Component of the ribosome, a large ribonucleoprotein complex responsible for the synthesis of proteins in the cell. The small ribosomal subunit (SSU) binds messenger RNAs (mRNAs) and translates the encoded message by selecting cognate aminoacyl-transfer RNA (tRNA) molecules. The large subunit (LSU) contains the ribosomal catalytic site termed the peptidyl transferase center (PTC), which catalyzes the formation of peptide bonds, thereby polymerizing the amino acids delivered by tRNAs into a polypeptide chain. The nascent polypeptides leave the ribosome through a tunnel in the LSU and interact with protein factors that function in enzymatic processing, targeting, and the membrane insertion of nascent chains at the exit of the ribosomal tunnel. This Caenorhabditis elegans protein is Large ribosomal subunit protein uL18 (rpl-5).